Reading from the N-terminus, the 310-residue chain is MANIVYKLSESEIQHLLQQITFETSQLSPGMKARTKYKQSVINIYNSGKVMFQGKNAEAVAQQLLPDHTTTSKNSSSSNQSSGETLAYNHYNCIGSDEAGSGDYFGPLTVCAAYVSKENVKILKTLGVDDSKKLNDQKIIELAEQLITFIPHSLLTLDNPKYNDRQAIGWSQVKMKAELHNEAIKNVTQKINCNELNYIVIDQFAVRGVYQRYALSSLPYPEKTKFETKGESKSLAIAAASIISRYAFVKHMDHISHKMKQDIPKGASNKVDLIAAQIIDKHGIETLDLISKKHFKNREKAQNLVTKKYK.

In terms of domain architecture, RNase H type-2 spans Tyr91–Lys307. Residues Asp97, Glu98, and Asp202 each contribute to the a divalent metal cation site.

It belongs to the RNase HII family. RnhC subfamily. Mn(2+) is required as a cofactor. Mg(2+) serves as cofactor.

Its subcellular location is the cytoplasm. It catalyses the reaction Endonucleolytic cleavage to 5'-phosphomonoester.. Its function is as follows. Endonuclease that specifically degrades the RNA of RNA-DNA hybrids. The protein is Ribonuclease HIII of Staphylococcus haemolyticus (strain JCSC1435).